We begin with the raw amino-acid sequence, 520 residues long: Bifunctional purine biosynthesis protein PurH (520 aa).

Residues 1–146 (MAPVALLSVS…KNHADVAVLT (146 aa)) form the MGS-like domain.

Belongs to the PurH family.

It carries out the reaction (6R)-10-formyltetrahydrofolate + 5-amino-1-(5-phospho-beta-D-ribosyl)imidazole-4-carboxamide = 5-formamido-1-(5-phospho-D-ribosyl)imidazole-4-carboxamide + (6S)-5,6,7,8-tetrahydrofolate. It catalyses the reaction IMP + H2O = 5-formamido-1-(5-phospho-D-ribosyl)imidazole-4-carboxamide. It functions in the pathway purine metabolism; IMP biosynthesis via de novo pathway; 5-formamido-1-(5-phospho-D-ribosyl)imidazole-4-carboxamide from 5-amino-1-(5-phospho-D-ribosyl)imidazole-4-carboxamide (10-formyl THF route): step 1/1. It participates in purine metabolism; IMP biosynthesis via de novo pathway; IMP from 5-formamido-1-(5-phospho-D-ribosyl)imidazole-4-carboxamide: step 1/1. This is Bifunctional purine biosynthesis protein PurH from Synechococcus sp. (strain CC9902).